The chain runs to 137 residues: Large ribosomal subunit protein uL16 (137 aa).

The protein belongs to the universal ribosomal protein uL16 family. Part of the 50S ribosomal subunit.

Its function is as follows. Binds 23S rRNA and is also seen to make contacts with the A and possibly P site tRNAs. The protein is Large ribosomal subunit protein uL16 of Bradyrhizobium sp. (strain BTAi1 / ATCC BAA-1182).